The primary structure comprises 786 residues: E3 ubiquitin-protein ligase pub3 (786 aa).

In terms of domain architecture, C2 spans 1–109; the sequence is MEQGAKRVRF…RSNREVSLTR (109 aa). Disordered regions lie at residues 134–225 and 263–306; these read IRAP…NSNA and TWTR…DSGN. Residues 142–193 are compositionally biased toward low complexity; the sequence is SSTTANRTTSTPTTTTARTTRTTPRPTATTNTSNQSTSNSTRNGTSAATSNG. The segment covering 204–213 has biased composition (polar residues); it reads HRSSPVTNRQ. Low complexity predominate over residues 214 to 225; that stretch reads TNNTSALSNSNA. The region spanning 236–269 is the WW 1 domain; that stretch reads GRLPPGWERRADSLGRTYYVDHNTRTTTWTRPAS. 2 stretches are compositionally biased toward polar residues: residues 263–285 and 295–305; these read TWTR…QRLN and SNPSLMQSDSG. WW domains lie at 306–339 and 364–397; these read NDLP…DPRN and GPLP…DPRL. The 334-residue stretch at 453-786 folds into the HECT domain; that stretch reads SAHDLKKRLM…VENTVGFGNE (334 aa). Catalysis depends on Cys754, which acts as the Glycyl thioester intermediate.

It carries out the reaction S-ubiquitinyl-[E2 ubiquitin-conjugating enzyme]-L-cysteine + [acceptor protein]-L-lysine = [E2 ubiquitin-conjugating enzyme]-L-cysteine + N(6)-ubiquitinyl-[acceptor protein]-L-lysine.. It participates in protein modification; protein ubiquitination. E3 ubiquitin-protein ligase which accepts ubiquitin from an E2 ubiquitin-conjugating enzyme in the form of a thioester and then directly transfers the ubiquitin to targeted substrates. The chain is E3 ubiquitin-protein ligase pub3 (pub3) from Schizosaccharomyces pombe (strain 972 / ATCC 24843) (Fission yeast).